Here is a 320-residue protein sequence, read N- to C-terminus: Eukaryotic translation initiation factor 3 subunit G (320 aa).

The segment at 1–25 (MPTGDFDSKPSWADQVEEEGEDDKC) is disordered. A phosphoserine mark is found at Ser8 and Ser11. 2 positions are modified to phosphothreonine: Thr38 and Thr41. Ser42, Ser189, Ser223, and Ser264 each carry phosphoserine. Residues 209 to 234 (KTGKYVPPSLRDGASRRGESMQPNRR) form a disordered region. Residues 221–234 (GASRRGESMQPNRR) show a composition bias toward basic and acidic residues. One can recognise an RRM domain in the interval 239-317 (ATIRVTNLSE…LILNVEWAKP (79 aa)).

The protein belongs to the eIF-3 subunit G family. In terms of assembly, component of the eukaryotic translation initiation factor 3 (eIF-3) complex, which is composed of 13 subunits: EIF3A, EIF3B, EIF3C, EIF3D, EIF3E, EIF3F, EIF3G, EIF3H, EIF3I, EIF3J, EIF3K, EIF3L and EIF3M. The eIF-3 complex appears to include 3 stable modules: module A is composed of EIF3A, EIF3B, EIF3G and EIF3I; module B is composed of EIF3F, EIF3H, and EIF3M; and module C is composed of EIF3C, EIF3D, EIF3E, EIF3K and EIF3L. EIF3C of module C binds EIF3B of module A and EIF3H of module B, thereby linking the three modules. EIF3J is a labile subunit that binds to the eIF-3 complex via EIF3B. The eIF-3 complex interacts with RPS6KB1 under conditions of nutrient depletion. Mitogenic stimulation leads to binding and activation of a complex composed of FRAP1 and RAPTOR, leading to phosphorylation and release of RPS6KB1 and binding of EIF4B to eIF-3. Interacts (via C-terminus) with AIFM1 (via N-terminus). Interacts with DHX33; the interaction is independent of RNA. In terms of processing, phosphorylated. Phosphorylation is enhanced upon serum stimulation.

It localises to the cytoplasm. Its subcellular location is the nucleus. The protein localises to the perinuclear region. In terms of biological role, RNA-binding component of the eukaryotic translation initiation factor 3 (eIF-3) complex, which is required for several steps in the initiation of protein synthesis. The eIF-3 complex associates with the 40S ribosome and facilitates the recruitment of eIF-1, eIF-1A, eIF-2:GTP:methionyl-tRNAi and eIF-5 to form the 43S pre-initiation complex (43S PIC). The eIF-3 complex stimulates mRNA recruitment to the 43S PIC and scanning of the mRNA for AUG recognition. The eIF-3 complex is also required for disassembly and recycling of post-termination ribosomal complexes and subsequently prevents premature joining of the 40S and 60S ribosomal subunits prior to initiation. The eIF-3 complex specifically targets and initiates translation of a subset of mRNAs involved in cell proliferation, including cell cycling, differentiation and apoptosis, and uses different modes of RNA stem-loop binding to exert either translational activation or repression. This subunit can bind 18S rRNA. The sequence is that of Eukaryotic translation initiation factor 3 subunit G from Bos taurus (Bovine).